Here is a 209-residue protein sequence, read N- to C-terminus: MADS-box transcription factor 2 (209 aa).

The 61-residue stretch at 1 to 61 (MGRGKIEIKR…GKLYDYCSPK (61 aa)) folds into the MADS-box domain. Residues 84-170 (HKSLSAEIDR…AFKLHQQDIA (87 aa)) enclose the K-box domain.

Highly expressed in anthers and carpels. Expressed in pollen, tapetum and stigma.

Its subcellular location is the nucleus. Probable transcription factor involved in the development of floral organs. B-class protein required for normal development of lodicules (whorl 2). This is MADS-box transcription factor 2 (MADS2) from Oryza sativa subsp. japonica (Rice).